Here is a 906-residue protein sequence, read N- to C-terminus: DNA gyrase subunit A (906 aa).

Residues 35-524 (IPDVRDGLKP…GEFDQDIEDL (490 aa)) enclose the Topo IIA-type catalytic domain. The O-(5'-phospho-DNA)-tyrosine intermediate role is filled by Y123. Residues 551-557 (QKRGGKG) carry the GyrA-box motif. The interval 886 to 906 (SESEEDSELEEDLEQAEEVYT) is disordered.

Belongs to the type II topoisomerase GyrA/ParC subunit family. In terms of assembly, heterotetramer, composed of two GyrA and two GyrB chains. In the heterotetramer, GyrA contains the active site tyrosine that forms a transient covalent intermediate with DNA, while GyrB binds cofactors and catalyzes ATP hydrolysis.

The protein localises to the cytoplasm. The catalysed reaction is ATP-dependent breakage, passage and rejoining of double-stranded DNA.. Functionally, a type II topoisomerase that negatively supercoils closed circular double-stranded (ds) DNA in an ATP-dependent manner to modulate DNA topology and maintain chromosomes in an underwound state. Negative supercoiling favors strand separation, and DNA replication, transcription, recombination and repair, all of which involve strand separation. Also able to catalyze the interconversion of other topological isomers of dsDNA rings, including catenanes and knotted rings. Type II topoisomerases break and join 2 DNA strands simultaneously in an ATP-dependent manner. The protein is DNA gyrase subunit A of Rickettsia felis (strain ATCC VR-1525 / URRWXCal2) (Rickettsia azadi).